Here is a 326-residue protein sequence, read N- to C-terminus: Transcription cofactor vestigial-like protein 3 (326 aa).

Residues 54-82 are disordered; sequence SLEVTLPSKQEEEEEEEEDEEEEEKDQPA. A Glycyl lysine isopeptide (Lys-Gly) (interchain with G-Cter in SUMO2) cross-link involves residue Lys62. Over residues 64–78 the composition is skewed to acidic residues; it reads EEEEEEEEDEEEEEK. A Glycyl lysine isopeptide (Lys-Gly) (interchain with G-Cter in SUMO2) cross-link involves residue Lys129. The disordered stretch occupies residues 184–208; it reads TADPNSWPGHGLHQTGPAPPPTASE.

This sequence belongs to the vestigial family.

The protein resides in the nucleus. Functionally, may act as a specific coactivator for the mammalian TEFs. This chain is Transcription cofactor vestigial-like protein 3, found in Mus musculus (Mouse).